Here is a 61-residue protein sequence, read N- to C-terminus: Beta-defensin 133 (61 aa).

A signal peptide spans 1-23 (MKIHVFLFVLFFFLVPIATRVKC). Disulfide bonds link Cys-31–Cys-59 and Cys-38–Cys-52.

This sequence belongs to the beta-defensin family.

It is found in the secreted. Functionally, has antibacterial activity. The polypeptide is Beta-defensin 133 (DEFB133) (Homo sapiens (Human)).